A 347-amino-acid polypeptide reads, in one-letter code: 4-hydroxy-2-oxovalerate aldolase 2 (347 aa).

Residues 9 to 259 (ITIVDTTLRD…DTGVDLFPLI (251 aa)) enclose the Pyruvate carboxyltransferase domain. Substrate contacts are provided by residues 17–18 (RD), serine 171, and histidine 198. Aspartate 18 serves as a coordination point for Mn(2+). Mn(2+)-binding residues include histidine 198 and histidine 200. Position 289 (tyrosine 289) interacts with substrate.

The protein belongs to the 4-hydroxy-2-oxovalerate aldolase family.

It catalyses the reaction (S)-4-hydroxy-2-oxopentanoate = acetaldehyde + pyruvate. In Rhodococcus opacus (strain B4), this protein is 4-hydroxy-2-oxovalerate aldolase 2.